A 1113-amino-acid chain; its full sequence is Histone deacetylase 5 (1113 aa).

The interval 1 to 22 (MNSPNESDGMSGREPSLGILPR) is disordered. Lys35 is covalently cross-linked (Glycyl lysine isopeptide (Lys-Gly) (interchain with G-Cter in SUMO2)). Disordered stretches follow at residues 39–63 (PGAM…RGAL) and 187–272 (KEPT…SSPL). The segment covering 238 to 249 (DSRDDFPLRKTA) has biased composition (basic and acidic residues). The residue at position 250 (Ser250) is a Phosphoserine; by AMPK, CaMK1, SIK1 and PKD/PRKD1. Over residues 263-272 (KVAERRSSPL) the composition is skewed to basic and acidic residues. The residue at position 283 (Thr283) is a Phosphothreonine; by PKC. The disordered stretch occupies residues 472–494 (RTVGKLPRHRPLSRTQSSPLPQS). The segment covering 484-494 (SRTQSSPLPQS) has biased composition (low complexity). Ser488 is subject to Phosphoserine; by AMPK, CaMK1, SIK1 and PKD/PRKD1. Lys523 carries the N6-acetyllysine modification. The tract at residues 526 to 611 (TKTGELSRQP…PDEGPDLEES (86 aa)) is disordered. The span at 571-610 (STQEDLEEEEEEEEEEEEDCIQVKDEDGESGPDEGPDLEE) shows a compositional bias: acidic residues. Phosphoserine is present on residues Ser600 and Ser650. The interval 675 to 1019 (GVVYDTFMLK…VSALLSVELQ (345 aa)) is histone deacetylase. Zn(2+)-binding residues include Cys687, Cys689, His695, and Cys772. His824 is an active-site residue. Residues 1072-1113 (EEAETVSAMALLSVGAEQAQAVATQEHSPRPAEEPMEQEPAL) carry the Nuclear export signal motif. Positions 1088–1113 (EQAQAVATQEHSPRPAEEPMEQEPAL) are disordered. Residue Ser1099 is modified to Phosphoserine.

Belongs to the histone deacetylase family. HD type 2 subfamily. Interacts with AHRR, BAHD1, BCOR, HDAC7, HDAC9, CTBP1, MEF2C, NCOR2, NRIP1, PHB2 and a 14-3-3 chaperone protein. Interacts with BCL6, DDIT3/CHOP, GRK5, KDM5B and MYOCD. Interacts with EP300 in the presence of TFAP2C. Interacts with ANKRA2. Interacts with CUL7 (as part of the 3M complex); negatively regulated by ANKRA2. Interacts with ZBTB7B; the interaction allows the recruitment of HDAC4 on CD8 loci for deacetylation and possible inhibition of CD8 genes expression. Interacts with RARA. In terms of processing, phosphorylated by AMPK, CaMK1, SIK1 and PRKD1 at Ser-250 and Ser-488. The phosphorylation is required for the export to the cytoplasm and inhibition. Phosphorylated by the PKC kinases PKN1 and PKN2, impairing nuclear import. Phosphorylated by GRK5, leading to nuclear export of HDAC5 and allowing MEF2-mediated transcription. Ubiquitinated. Polyubiquitination however does not lead to its degradation.

It localises to the nucleus. The protein localises to the cytoplasm. The enzyme catalyses N(6)-acetyl-L-lysyl-[histone] + H2O = L-lysyl-[histone] + acetate. Its function is as follows. Responsible for the deacetylation of lysine residues on the N-terminal part of the core histones (H2A, H2B, H3 and H4). Histone deacetylation gives a tag for epigenetic repression and plays an important role in transcriptional regulation, cell cycle progression and developmental events. Histone deacetylases act via the formation of large multiprotein complexes. Involved in muscle maturation by repressing transcription of myocyte enhancer MEF2C. During muscle differentiation, it shuttles into the cytoplasm, allowing the expression of myocyte enhancer factors. Serves as a corepressor of RARA and causes its deacetylation. In association with RARA, plays a role in the repression of microRNA-10a and thereby in the inflammatory response. The polypeptide is Histone deacetylase 5 (Hdac5) (Mus musculus (Mouse)).